Here is a 188-residue protein sequence, read N- to C-terminus: MSLYALLLVALGMSMDAFAVALAKGAAVRMPPRKIAATALVFGTVEAFMPLAGWVGGFYAKPFISEWDHWVAFVLLGGLGLKMMREGLSGEAEDVRESKQESLWMTVLTAFGTSIDSMIVGVGLAFMEVNIAFAAAVIGMAATVMVTIGLTAGKAFGVLFGRRAEFAGGLVLIAIGTWTLLSHLGLIQ.

Helical transmembrane passes span 3-23 (LYALLLVALGMSMDAFAVALA), 35-55 (IAATALVFGTVEAFMPLAGWV), 63-83 (FISEWDHWVAFVLLGGLGLKM), 104-126 (WMTVLTAFGTSIDSMIVGVGLAF), 140-160 (MAATVMVTIGLTAGKAFGVLF), and 167-187 (AGGLVLIAIGTWTLLSHLGLI).

This sequence belongs to the MntP (TC 9.B.29) family.

The protein localises to the cell inner membrane. Functionally, probably functions as a manganese efflux pump. The protein is Putative manganese efflux pump MntP of Neisseria gonorrhoeae (strain ATCC 700825 / FA 1090).